Consider the following 562-residue polypeptide: MNINVANLLNGNYILLLFVVLALGLCLGKLRLGSIQLGNAIGVLVVSLLLGQQHFAINTEALNLGFMLFIFCVGVEAGPNFFSIFFRDGKNYLMLALVMVGSAMILALGLGKLFGWDIGLTAGMLAGSMTSTPVLVGAGDTLRHTMANGSSLQQAQDNLSLGYALTYLIGLVSLILGARYLPKLQHQDLPTSAQQIARERGLDTDSQRKVYLPVIRAYRVGPELVAWADGKNLRELGIYRQTGCYIERIRRNGILANPDGDAVLQVGDEISLVGYPDAHSRLDPSFRNGKEVFDRDLLDMRIVTEEIVVKNSNAVGKRLSHLKLTDHGCFLNRVIRSQIEMPIDDNVVLNKGDVLQVSGDARRVKSVAEKIGFISIHSQVTDLLAFCSFFILGLMIGLITFQFSNFSFGIGNAAGLLLAGIMLGFLRANHPTFGYIPQGALNMVKEFGLMVFMAGVGLSAGGGINSSLGAVGGQMLISGLIVSLVPVVICFVFGAYVLRMNRALLFGAIMGARTCAPAMDIISDTARSNIPALGYAGTYAIANVLLTLAGSLIVILWPGILG.

6 consecutive transmembrane segments (helical) span residues Leu-8 to Gly-28, Leu-37 to Ile-57, Phe-66 to Phe-86, Met-94 to Phe-114, Ile-118 to Ala-138, and Asn-158 to Ala-178. 2 consecutive RCK C-terminal domains span residues Leu-202–Asn-288 and Lys-290–Phe-373. 5 consecutive transmembrane segments (helical) span residues Leu-383 to Phe-403, Phe-406 to Leu-426, Phe-447 to Ser-467, Met-475 to Ala-495, and Ile-541 to Leu-561.

This sequence belongs to the AAE transporter (TC 2.A.81) family. YbjL subfamily.

It is found in the cell membrane. In Yersinia pestis bv. Antiqua (strain Antiqua), this protein is Putative transport protein YPA_0617.